Here is a 403-residue protein sequence, read N- to C-terminus: Keratin, type I cytoskeletal 19 (403 aa).

The interval 1–82 (MTSYSYRQTS…AVSDGLLSGN (82 aa)) is head. Position 7 is an omega-N-methylarginine (arginine 7). 2 positions are modified to phosphoserine: serine 14 and serine 22. Residue arginine 24 is modified to Asymmetric dimethylarginine; alternate. Arginine 24 is modified (omega-N-methylarginine; alternate). Phosphoserine is present on serine 27. Arginine 32 is modified (omega-N-methylarginine). 2 positions are modified to phosphoserine: serine 35 and serine 40. Omega-N-methylarginine is present on residues arginine 43 and arginine 51. Serine 57 is modified (phosphoserine). Arginine 64 is subject to Omega-N-methylarginine. A phosphoserine mark is found at serine 67 and serine 75. A coil 1A region spans residues 83 to 118 (EKITMQNLNDRLASYLDKVRALEQANGELEVKIRDW). An IF rod domain is found at 83–394 (EKITMQNLND…SLLEGQEAHY (312 aa)). The linker 1 stretch occupies residues 119–136 (YQKQGPGPSRDYNHYFKT). The segment at 137-228 (IEDLRDKILG…KNHEEEITAL (92 aa)) is coil 1B. The interval 229 to 251 (RSQVGGQVSVEVDSTPGVDLAKI) is linker 12. The necessary for interaction with PNN stretch occupies residues 247-393 (DLAKILSEMR…RSLLEGQEAH (147 aa)). The coil 2 stretch occupies residues 252–390 (LSEMRSQYEI…ATYRSLLEGQ (139 aa)). At threonine 326 the chain carries Phosphothreonine. Positions 391-403 (EAHYNNLPTPKAI) are rod-like helical tail. Position 394 is a phosphotyrosine (tyrosine 394).

Belongs to the intermediate filament family. As to quaternary structure, heterotetramer of two type I and two type II keratins. Interacts with PNN and the actin-binding domain of DMD.

Functionally, involved in the organization of myofibers. Together with KRT8, helps to link the contractile apparatus to dystrophin at the costameres of striated muscle. The polypeptide is Keratin, type I cytoskeletal 19 (Krt19) (Mus musculus (Mouse)).